Reading from the N-terminus, the 1092-residue chain is NAD-specific glutamate dehydrogenase (1092 aa).

Lys-626 is an active-site residue.

This sequence belongs to the Glu/Leu/Phe/Val dehydrogenases family. As to quaternary structure, homotetramer. Interacts with NNK1. Phosphorylated by a complex containing the NNK1 kinase.

The enzyme catalyses L-glutamate + NAD(+) + H2O = 2-oxoglutarate + NH4(+) + NADH + H(+). Functionally, NAD(+)-dependent glutamate dehydrogenase which degrades glutamate to ammonia and alpha-ketoglutarate. The protein is NAD-specific glutamate dehydrogenase (GDH2) of Saccharomyces cerevisiae (strain ATCC 204508 / S288c) (Baker's yeast).